Reading from the N-terminus, the 358-residue chain is Histidinol-phosphate aminotransferase (358 aa).

N6-(pyridoxal phosphate)lysine is present on K218.

This sequence belongs to the class-II pyridoxal-phosphate-dependent aminotransferase family. Histidinol-phosphate aminotransferase subfamily. In terms of assembly, homodimer. Pyridoxal 5'-phosphate serves as cofactor.

The enzyme catalyses L-histidinol phosphate + 2-oxoglutarate = 3-(imidazol-4-yl)-2-oxopropyl phosphate + L-glutamate. It functions in the pathway amino-acid biosynthesis; L-histidine biosynthesis; L-histidine from 5-phospho-alpha-D-ribose 1-diphosphate: step 7/9. This is Histidinol-phosphate aminotransferase from Dehalococcoides mccartyi (strain ATCC BAA-2100 / JCM 16839 / KCTC 5957 / BAV1).